Consider the following 413-residue polypeptide: 3-isopropylmalate dehydratase large subunit (413 aa).

Cysteine 295, cysteine 353, and cysteine 356 together coordinate [4Fe-4S] cluster.

Belongs to the aconitase/IPM isomerase family. LeuC type 2 subfamily. In terms of assembly, heterodimer of LeuC and LeuD. The cofactor is [4Fe-4S] cluster.

It carries out the reaction (2R,3S)-3-isopropylmalate = (2S)-2-isopropylmalate. Its pathway is amino-acid biosynthesis; L-leucine biosynthesis; L-leucine from 3-methyl-2-oxobutanoate: step 2/4. Functionally, catalyzes the isomerization between 2-isopropylmalate and 3-isopropylmalate, via the formation of 2-isopropylmaleate. This chain is 3-isopropylmalate dehydratase large subunit, found in Pyrobaculum calidifontis (strain DSM 21063 / JCM 11548 / VA1).